The sequence spans 298 residues: Bifunctional protein FolD (298 aa).

NADP(+)-binding positions include 165 to 167 (GRS), Ser-190, and Ile-231.

It belongs to the tetrahydrofolate dehydrogenase/cyclohydrolase family. In terms of assembly, homodimer.

The enzyme catalyses (6R)-5,10-methylene-5,6,7,8-tetrahydrofolate + NADP(+) = (6R)-5,10-methenyltetrahydrofolate + NADPH. It catalyses the reaction (6R)-5,10-methenyltetrahydrofolate + H2O = (6R)-10-formyltetrahydrofolate + H(+). Its pathway is one-carbon metabolism; tetrahydrofolate interconversion. Functionally, catalyzes the oxidation of 5,10-methylenetetrahydrofolate to 5,10-methenyltetrahydrofolate and then the hydrolysis of 5,10-methenyltetrahydrofolate to 10-formyltetrahydrofolate. This chain is Bifunctional protein FolD, found in Prochlorococcus marinus (strain MIT 9312).